A 779-amino-acid polypeptide reads, in one-letter code: Endonuclease MutS2 (779 aa).

ATP is bound at residue Gly-328–Thr-335. One can recognise a Smr domain in the interval Leu-704 to Gly-779.

It belongs to the DNA mismatch repair MutS family. MutS2 subfamily. As to quaternary structure, homodimer. Binds to stalled ribosomes, contacting rRNA.

Its function is as follows. Endonuclease that is involved in the suppression of homologous recombination and thus may have a key role in the control of bacterial genetic diversity. In terms of biological role, acts as a ribosome collision sensor, splitting the ribosome into its 2 subunits. Detects stalled/collided 70S ribosomes which it binds and splits by an ATP-hydrolysis driven conformational change. Acts upstream of the ribosome quality control system (RQC), a ribosome-associated complex that mediates the extraction of incompletely synthesized nascent chains from stalled ribosomes and their subsequent degradation. Probably generates substrates for RQC. This is Endonuclease MutS2 from Streptococcus pyogenes serotype M1.